Reading from the N-terminus, the 1298-residue chain is DNA repair protein rad-50 (1298 aa).

9 residues coordinate ATP: Arg13, Asn38, Gly39, Gly41, Lys42, Thr43, Thr44, Ile66, and Gln158. Thr43 serves as a coordination point for Mg(2+). Gln158 contributes to the Mg(2+) binding site. 3 coiled-coil regions span residues 222–291 (ARQN…IRVE), 317–598 (EERA…QYRK), and 622–660 (AEEV…IEES). The 98-residue stretch at 622–719 (AEEVSEKLEN…EEIIIVKAEG (98 aa)) folds into the Zinc-hook domain. Cys666 and Cys669 together coordinate Zn(2+). Coiled coils occupy residues 691 to 719 (LSFP…KAEG) and 754 to 1092 (KNEK…KESI).

The protein belongs to the SMC family. RAD50 subfamily. Component of the MRN complex composed of two heterodimers rad-50 and mre-11 associated with a single nbs-1. It depends on Zn(2+) as a cofactor.

It is found in the nucleus. Its subcellular location is the chromosome. The enzyme catalyses ATP + H2O = ADP + phosphate + H(+). Component of the MRN complex, which plays a central role in double-strand break (DSB) repair, DNA recombination, maintenance of telomere integrity and meiosis. The MRN complex is involved in the repair of DNA double-strand breaks (DSBs) via homologous recombination (HR), an error-free mechanism which primarily occurs during S and G2 phases. The complex (1) mediates the end resection of damaged DNA, which generates proper single-stranded DNA, a key initial steps in HR, and is (2) required for the recruitment of other repair factors and efficient activation of ATM and ATR upon DNA damage. The MRN complex possesses single-strand endonuclease activity and double-strand-specific 3'-5' exonuclease activity, which are provided by mre-11, to initiate end resection, which is required for single-strand invasion and recombination. Within the complex, rad-50 is both required to bind DNA ends and hold them in close proximity and regulate the activity of mre-11. Rad-50 provides an ATP-dependent control of mre-11 by positioning DNA ends into the mre-11 active site: ATP-binding induces a large structural change from an open form with accessible mre-11 nuclease sites into a closed form. The protein is DNA repair protein rad-50 (rad-50) of Caenorhabditis elegans.